Consider the following 470-residue polypeptide: tRNA (guanine(37)-N(1))-methyltransferase (470 aa).

S-adenosyl-L-methionine-binding positions include 304 to 305, 332 to 333, and asparagine 370; these read DL and DG.

It belongs to the class I-like SAM-binding methyltransferase superfamily. TRM5/TYW2 family. As to quaternary structure, monomer.

The protein resides in the mitochondrion matrix. It localises to the nucleus. Its subcellular location is the cytoplasm. The catalysed reaction is guanosine(37) in tRNA + S-adenosyl-L-methionine = N(1)-methylguanosine(37) in tRNA + S-adenosyl-L-homocysteine + H(+). Specifically methylates the N1 position of guanosine-37 in various cytoplasmic and mitochondrial tRNAs. Methylation is not dependent on the nature of the nucleoside 5' of the target nucleoside. This is the first step in the biosynthesis of wybutosine (yW), a modified base adjacent to the anticodon of tRNAs and required for accurate decoding. The protein is tRNA (guanine(37)-N(1))-methyltransferase of Theileria parva (East coast fever infection agent).